The primary structure comprises 275 residues: Glycerol-3-phosphate dehydrogenase [NAD(P)+] (275 aa).

NADPH contacts are provided by Trp-12, Arg-32, and Lys-105. Positions 105, 133, and 135 each coordinate sn-glycerol 3-phosphate. Ala-137 is an NADPH binding site. Sn-glycerol 3-phosphate-binding residues include Lys-188, Asp-241, Ser-251, Arg-252, and Asn-253. Catalysis depends on Lys-188, which acts as the Proton acceptor. Arg-252 lines the NADPH pocket.

Belongs to the NAD-dependent glycerol-3-phosphate dehydrogenase family.

Its subcellular location is the cytoplasm. The catalysed reaction is sn-glycerol 3-phosphate + NAD(+) = dihydroxyacetone phosphate + NADH + H(+). The enzyme catalyses sn-glycerol 3-phosphate + NADP(+) = dihydroxyacetone phosphate + NADPH + H(+). The protein operates within membrane lipid metabolism; glycerophospholipid metabolism. Its function is as follows. Catalyzes the reduction of the glycolytic intermediate dihydroxyacetone phosphate (DHAP) to sn-glycerol 3-phosphate (G3P), the key precursor for phospholipid synthesis. The protein is Glycerol-3-phosphate dehydrogenase [NAD(P)+] of Paramagnetospirillum magneticum (strain ATCC 700264 / AMB-1) (Magnetospirillum magneticum).